The following is a 113-amino-acid chain: MNTVRVTFLLVFVVAVSLGQADKDENRMEMKDKTEQGKSYLHFAENLLLQKLEDVEAKLLEKDSEKSINSRQKRCIEEGVPCDENDPRCCSGLVCLKPTLRGIWYKSYYCYKK.

The first 21 residues, 1–21, serve as a signal peptide directing secretion; it reads MNTVRVTFLLVFVVAVSLGQA. Residues 22–74 constitute a propeptide that is removed on maturation; it reads DKDENRMEMKDKTEQGKSYLHFAENLLLQKLEDVEAKLLEKDSEKSINSRQKR. 3 cysteine pairs are disulfide-bonded: cysteine 75/cysteine 90, cysteine 82/cysteine 95, and cysteine 89/cysteine 110.

This sequence belongs to the neurotoxin 14 (magi-1) family. 01 (HNTX-16) subfamily. Expressed by the venom gland.

Its subcellular location is the secreted. Probable ion channel inhibitor. This is U11-theraphotoxin-Hhn1d from Cyriopagopus hainanus (Chinese bird spider).